Reading from the N-terminus, the 189-residue chain is Probable nicotinate-nucleotide adenylyltransferase (189 aa).

It belongs to the NadD family.

It catalyses the reaction nicotinate beta-D-ribonucleotide + ATP + H(+) = deamido-NAD(+) + diphosphate. It participates in cofactor biosynthesis; NAD(+) biosynthesis; deamido-NAD(+) from nicotinate D-ribonucleotide: step 1/1. In terms of biological role, catalyzes the reversible adenylation of nicotinate mononucleotide (NaMN) to nicotinic acid adenine dinucleotide (NaAD). The protein is Probable nicotinate-nucleotide adenylyltransferase of Bacillus mycoides (strain KBAB4) (Bacillus weihenstephanensis).